A 570-amino-acid polypeptide reads, in one-letter code: High-affinity hexose transporter HXT6 (570 aa).

At 1–60 (MSQDAAIAEQTPVEHLSAVDSASHSVLSTPSNKAERDEIKAYGEGEEHEPVVEIPKRPAS) the chain is on the cytoplasmic side. A helical transmembrane segment spans residues 61 to 81 (AYVTVSIMCIMIAFGGFVFGW). The Extracellular portion of the chain corresponds to 82 to 116 (DTGTISGFINQTDFIRRFGMKHKDGTNYLSKVRTG). Residue Asn-91 is glycosylated (N-linked (GlcNAc...) asparagine). The helical transmembrane segment at 117–137 (LIVSIFNIGCAIGGIILSKLG) threads the bilayer. At 138-143 (DMYGRK) the chain is on the cytoplasmic side. Residues 144 to 164 (VGLIVVVVIYIIGIIIQIASI) form a helical membrane-spanning segment. Residues 165 to 174 (NKWYQYFIGR) are Extracellular-facing. Residues 175 to 195 (IISGLGVGGIAVLSPMLISEV) form a helical membrane-spanning segment. Residues 196-201 (SPKHLR) are Cytoplasmic-facing. Residues 202–222 (GTLVSCYQLMITAGIFLGYCT) traverse the membrane as a helical segment. The Extracellular portion of the chain corresponds to 223–236 (NFGTKNYSNSVQWR). An N-linked (GlcNAc...) asparagine glycan is attached at Asn-228. Residues 237-257 (VPLGLCFAWALFMIGGMTFVP) form a helical membrane-spanning segment. Residues 258 to 340 (ESPRYLAEVG…IQSLQQLTGD (83 aa)) lie on the Cytoplasmic side of the membrane. The chain crosses the membrane as a helical span at residues 341 to 357 (NYFFYYGTTIFKAVGLS). Residues 358 to 363 (DSFETS) lie on the Extracellular side of the membrane. Residues 364-381 (IVLGIVNFASTFVGIYVV) form a helical membrane-spanning segment. Residues 382 to 388 (ERYGRRT) are Cytoplasmic-facing. Residues 389-409 (CLLWGAASMTACMVVYASVGV) traverse the membrane as a helical segment. Residues 410-431 (TRLWPNGQDQPSSKGAGNCMIV) lie on the Extracellular side of the membrane. The chain crosses the membrane as a helical span at residues 432–452 (FACFYIFCFATTWAPIPYVVV). The Cytoplasmic portion of the chain corresponds to 453 to 469 (SETFPLRVKSKAMSIAT). The helical transmembrane segment at 470–490 (AANWLWGFLIGFFTPFITGAI) threads the bilayer. A topological domain (extracellular) is located at residue Asn-491. Residues 492–512 (FYYGYVFMGCLVFMFFYVLLV) form a helical membrane-spanning segment. Residues 513-570 (VPETKGLTLEEVNTMWEEGVLPWKSASWVPPSRRGANYDAEEMAHDDKPLYKRMFSTK) lie on the Cytoplasmic side of the membrane. Lys-560 participates in a covalent cross-link: Glycyl lysine isopeptide (Lys-Gly) (interchain with G-Cter in ubiquitin).

Belongs to the major facilitator superfamily. Sugar transporter (TC 2.A.1.1) family.

The protein localises to the membrane. High-affinity glucose transporter. The protein is High-affinity hexose transporter HXT6 (HXT6) of Saccharomyces cerevisiae (strain ATCC 204508 / S288c) (Baker's yeast).